A 193-amino-acid polypeptide reads, in one-letter code: NAD(P)H-quinone oxidoreductase subunit I (193 aa).

4Fe-4S ferredoxin-type domains are found at residues glycine 55–glutamate 84 and lysine 95–glutamate 124. The [4Fe-4S] cluster site is built by cysteine 64, cysteine 67, cysteine 70, cysteine 74, cysteine 104, cysteine 107, cysteine 110, and cysteine 114. Residues leucine 169–aspartate 193 are disordered.

It belongs to the complex I 23 kDa subunit family. As to quaternary structure, NDH-1 is composed of at least 11 different subunits. [4Fe-4S] cluster is required as a cofactor.

The protein localises to the cellular thylakoid membrane. It carries out the reaction a plastoquinone + NADH + (n+1) H(+)(in) = a plastoquinol + NAD(+) + n H(+)(out). It catalyses the reaction a plastoquinone + NADPH + (n+1) H(+)(in) = a plastoquinol + NADP(+) + n H(+)(out). In terms of biological role, NDH-1 shuttles electrons from an unknown electron donor, via FMN and iron-sulfur (Fe-S) centers, to quinones in the respiratory and/or the photosynthetic chain. The immediate electron acceptor for the enzyme in this species is believed to be plastoquinone. Couples the redox reaction to proton translocation, and thus conserves the redox energy in a proton gradient. The chain is NAD(P)H-quinone oxidoreductase subunit I from Rippkaea orientalis (strain PCC 8801 / RF-1) (Cyanothece sp. (strain PCC 8801)).